The primary structure comprises 37 residues: Cortex morphogenetic protein A (37 aa).

In terms of assembly, can form a complex with SpoIVA and ClpX.

It localises to the forespore. Functionally, ensures proper spore envelope assembly. Represses premature cortex assembly until coat assembly successfully initiates. Also participates in a quality-control pathway that selectively removes defective sporulating cells through regulated cell death. Acts as an adaptator that delivers SpoIVA to the ClpXP proteolytic machinery for degradation, specifically in cells that improperly assemble the spore envelope. In Bacillus subtilis (strain 168), this protein is Cortex morphogenetic protein A.